A 540-amino-acid chain; its full sequence is MSSFDPPNHRYSALVLILLLLGFSVAAADDVSWTEDSSLESPGCTNKFQMVKVLNWVDGVEGDFLTGLTAQFGAALPSVPDQALRFPAAFVDPLDSCSHLSSRLDGHIALSIRGNCAFTEKAKHAEAAGASALLVINDKEDLDEMGCMEKDTSLNVSIPVLMISKSSGDALNKSMVDNKNVELLLYAPKRPAVDLTAGLLLLMAVGTVVVASLWSELTDPDQANESYSILAKDVSSAGTRKDDPEKEILDISVTGAVFFIVTASIFLLLLFYFMSSWFVWVLTIFFCIGGMQGMHNIIMAVILRKCRHLARKSVKLPLLGTMSVLSLLVNIVCLAFAVFWFIKRHTSYSWVGQDILGICLMITALQVVRLPNIKVATVLLCCAFVYDIFWVFISPLIFHESVMIVVAQGDSSTGESIPMLLRIPRFFDPWGGYDMIGFGDILFPGLLISFASRYDKIKKRVISNGYFLWLTIGYGIGLLLTYLGLYLMDGHGQPALLYIVPCTLGLAVILGLVRGELKELWNYGIEESESHTPEDPMPVA.

An N-terminal signal peptide occupies residues 1 to 28 (MSSFDPPNHRYSALVLILLLLGFSVAAA). The Lumenal portion of the chain corresponds to 29–194 (DDVSWTEDSS…LYAPKRPAVD (166 aa)). The 75-residue stretch at 98–172 (SHLSSRLDGH…ISKSSGDALN (75 aa)) folds into the PA domain. N-linked (GlcNAc...) asparagine glycans are attached at residues Asn-155 and Asn-172. A helical transmembrane segment spans residues 195–215 (LTAGLLLLMAVGTVVVASLWS). Residues 216 to 250 (ELTDPDQANESYSILAKDVSSAGTRKDDPEKEILD) lie on the Cytoplasmic side of the membrane. A helical transmembrane segment spans residues 251-273 (ISVTGAVFFIVTASIFLLLLFYF). At 274–276 (MSS) the chain is on the lumenal side. A helical transmembrane segment spans residues 277 to 299 (WFVWVLTIFFCIGGMQGMHNIIM). Residues 300 to 321 (AVILRKCRHLARKSVKLPLLGT) are Cytoplasmic-facing. The chain crosses the membrane as a helical span at residues 322 to 342 (MSVLSLLVNIVCLAFAVFWFI). The Lumenal portion of the chain corresponds to 343-347 (KRHTS). A helical membrane pass occupies residues 348–368 (YSWVGQDILGICLMITALQVV). Residues 369 to 377 (RLPNIKVAT) lie on the Cytoplasmic side of the membrane. Residues 378–398 (VLLCCAFVYDIFWVFISPLIF) form a helical membrane-spanning segment. The active site involves Asp-387. Over 399-429 (HESVMIVVAQGDSSTGESIPMLLRIPRFFDP) the chain is Lumenal. Residues 430–450 (WGGYDMIGFGDILFPGLLISF) form a helical membrane-spanning segment. Asp-440 is an active-site residue. Over 451–466 (ASRYDKIKKRVISNGY) the chain is Cytoplasmic. Residues 467-487 (FLWLTIGYGIGLLLTYLGLYL) form a helical membrane-spanning segment. At 488 to 492 (MDGHG) the chain is on the lumenal side. The chain crosses the membrane as a helical span at residues 493–513 (QPALLYIVPCTLGLAVILGLV). The PAL signature appears at 494–496 (PAL). The Cytoplasmic segment spans residues 514-540 (RGELKELWNYGIEESESHTPEDPMPVA).

It belongs to the peptidase A22B family. In terms of processing, glycosylated. In terms of tissue distribution, ubiquitous.

It is found in the endosome membrane. Intramembrane-cleaving aspartic protease (I-CLiP) that cleaves type II membrane signal peptides in the hydrophobic plane of the membrane. This chain is Signal peptide peptidase-like 3 (SPPL3), found in Arabidopsis thaliana (Mouse-ear cress).